Consider the following 287-residue polypeptide: tRNA-cytidine(32) 2-sulfurtransferase (287 aa).

A PP-loop motif motif is present at residues 39-44; it reads SGGKDS. Residues cysteine 114, cysteine 117, and cysteine 205 each contribute to the [4Fe-4S] cluster site.

Belongs to the TtcA family. Homodimer. Requires Mg(2+) as cofactor. [4Fe-4S] cluster serves as cofactor.

The protein localises to the cytoplasm. It catalyses the reaction cytidine(32) in tRNA + S-sulfanyl-L-cysteinyl-[cysteine desulfurase] + AH2 + ATP = 2-thiocytidine(32) in tRNA + L-cysteinyl-[cysteine desulfurase] + A + AMP + diphosphate + H(+). Its pathway is tRNA modification. Catalyzes the ATP-dependent 2-thiolation of cytidine in position 32 of tRNA, to form 2-thiocytidine (s(2)C32). The sulfur atoms are provided by the cysteine/cysteine desulfurase (IscS) system. The chain is tRNA-cytidine(32) 2-sulfurtransferase from Dechloromonas aromatica (strain RCB).